Consider the following 409-residue polypeptide: Pentatricopeptide repeat-containing protein At1g31790 (409 aa).

PPR repeat units follow at residues asparagine 87–proline 121, threonine 122–arginine 152, aspartate 153–glycine 187, proline 192–aspartate 226, aspartate 229–alanine 259, asparagine 260–lysine 294, asparagine 295–serine 330, aspartate 331–glutamate 361, and serine 363–alanine 397.

This sequence belongs to the PPR family. PCMP-A subfamily.

The sequence is that of Pentatricopeptide repeat-containing protein At1g31790 (PCMP-A1) from Arabidopsis thaliana (Mouse-ear cress).